The sequence spans 550 residues: Arginine--tRNA ligase (550 aa).

The 'HIGH' region motif lies at A130–G140.

Belongs to the class-I aminoacyl-tRNA synthetase family. Monomer.

It localises to the cytoplasm. The enzyme catalyses tRNA(Arg) + L-arginine + ATP = L-arginyl-tRNA(Arg) + AMP + diphosphate. The protein is Arginine--tRNA ligase of Rhodococcus opacus (strain B4).